A 408-amino-acid chain; its full sequence is E3 ubiquitin-protein ligase IE2 (408 aa).

The span at 1–10 shows a compositional bias: polar residues; it reads MSRQINAATP. 2 disordered regions span residues 1–67 and 176–199; these read MSRQ…ENVQ and QSPD…QSEP. Residues 13-25 show a composition bias toward basic residues; it reads SRRHRLSLSRRRI. Low complexity predominate over residues 30–47; that stretch reads SPEAQPSSSSRSQPSSSS. Tandem repeats lie at residues 34 to 41, 42 to 49, 51 to 54, and 55 to 58. The tract at residues 34–49 is 2 X 8 AA tandem repeats of Q-P-S-S-S-S-R-S; that stretch reads QPSSSSRSQPSSSSRS. The segment at 51–58 is 2 X 4 AA tandem repeats of R-R-Q-E; it reads RRQERRQE. Low complexity predominate over residues 183–197; the sequence is SPQSPQPQQQQQQQS. The RING-type zinc-finger motif lies at 207-255; sequence CNICFTTFKDTKNVNSSFVTSIHCNHAVCFKCYVKIIMDNSVYKCFCSA.

The protein belongs to the alphabaculovirus IE2 protein family. Homooligomer. Auto-ubiquitinated.

The protein resides in the host nucleus. It carries out the reaction S-ubiquitinyl-[E2 ubiquitin-conjugating enzyme]-L-cysteine + [acceptor protein]-L-lysine = [E2 ubiquitin-conjugating enzyme]-L-cysteine + N(6)-ubiquitinyl-[acceptor protein]-L-lysine.. In terms of biological role, RING-finger E3 ubiquitin ligase that plays an important regulatory role during the initial stages of infection. Migrates to specific nuclear foci early in infection supposely to prepare the sites for viral transcription and replication by targeting and ubiquitinating host proteins. Acts as a transcriptional activator and activates a number of viral promoters including itself, IE1 and the promoter of 39K gene. The chain is E3 ubiquitin-protein ligase IE2 (IE2) from Lepidoptera (butterflies and moths).